A 660-amino-acid polypeptide reads, in one-letter code: MSKKTSTIPTYGRYPELDRVRFPADMRNLSVDQLKQLADELRSETVDAVSTTGGHLGASLGVVELTVALHAVFNTPDDRIIWDVGHQAYPHKILTGRRDRIRTLRQPEGLSGFTRRAESEYDPFGAAHSSTSISAGLGMAVAHHLRAEEDPSYHERNVIAVIGDGSISAGMAYEAMNNAAVAGPGANRLIVVLNDNEMSIAPPVGSMSDYLSRLMSSRQFFSLRDLAGKVAKRLPGKIERTAKRAEEYARGMITGGTLFEELGFYYVGPVNGHDMSQLVPILRNLRDADDQGPILLHIITEKGRGYKPAEAAGDKYHAVSKFNVVTGEQKKAPAGPPSYTSIFSRELMRRAKTDDKLITITAAMPSGTGLNAFAKAYPDRFFDVGIAEQHAVTFAAGIASEGLRPFCAIYSTFLQRAYDQVVHDVALQNLPVRFAIDRAGLVGADGATHAGAFDLNYLCCLPNMVVMAPSDEVELLHATATACEYDAGPIAFRYPRGNGIGLDLPEKGEVLEIGKGRIVREARRAPNARGGVAILSLGPRMHESLRAADQLAAQGVPVTVADARFAKPIDKALVEDLARQHEVFITIEEGAIGGFSSLVVQHLAETGLLDKVKFRPMALPDRYIDHNTQDAQYEDAGLTAPHIVRTAADALGVEVAQQSA.

Thiamine diphosphate is bound by residues His-86 and 127-129 (AHS). Asp-164 provides a ligand contact to Mg(2+). Thiamine diphosphate-binding positions include 165 to 166 (GS), Asn-196, Tyr-306, and Glu-388. Asn-196 lines the Mg(2+) pocket.

The protein belongs to the transketolase family. DXPS subfamily. As to quaternary structure, homodimer. Mg(2+) is required as a cofactor. Requires thiamine diphosphate as cofactor.

The catalysed reaction is D-glyceraldehyde 3-phosphate + pyruvate + H(+) = 1-deoxy-D-xylulose 5-phosphate + CO2. It participates in metabolic intermediate biosynthesis; 1-deoxy-D-xylulose 5-phosphate biosynthesis; 1-deoxy-D-xylulose 5-phosphate from D-glyceraldehyde 3-phosphate and pyruvate: step 1/1. In terms of biological role, catalyzes the acyloin condensation reaction between C atoms 2 and 3 of pyruvate and glyceraldehyde 3-phosphate to yield 1-deoxy-D-xylulose-5-phosphate (DXP). This is 1-deoxy-D-xylulose-5-phosphate synthase from Gluconobacter oxydans (strain 621H) (Gluconobacter suboxydans).